The sequence spans 90 residues: Cell division topological specificity factor 2 (90 aa).

This sequence belongs to the MinE family.

In terms of biological role, prevents the cell division inhibition by proteins MinC and MinD at internal division sites while permitting inhibition at polar sites. This ensures cell division at the proper site by restricting the formation of a division septum at the midpoint of the long axis of the cell. In Syntrophomonas wolfei subsp. wolfei (strain DSM 2245B / Goettingen), this protein is Cell division topological specificity factor 2.